A 126-amino-acid chain; its full sequence is Thioredoxin H-type 1 (126 aa).

One can recognise a Thioredoxin domain in the interval 2 to 120 (AANDATSSEE…LQQTIVKHAA (119 aa)). Residues Cys46 and Cys49 each act as nucleophile in the active site. A disulfide bond links Cys46 and Cys49.

It belongs to the thioredoxin family. Plant H-type subfamily.

Its subcellular location is the cytoplasm. Functionally, participates in various redox reactions through the reversible oxidation of the active center dithiol to a disulfide. The H form is known to activate a number of cytosolic enzymes. The polypeptide is Thioredoxin H-type 1 (Nicotiana tabacum (Common tobacco)).